The sequence spans 189 residues: Holliday junction branch migration complex subunit RuvA (189 aa).

The interval 1–62 is domain I; it reads MIVALKGNIE…EEAWSLYGFA (62 aa). The segment at 63–138 is domain II; that stretch reads EEAEKRVFDT…FSLSLQEGSK (76 aa). The flexible linker stretch occupies residues 138–139; sequence KA. Residues 140–189 are domain III; sequence STPPVFEESRLALESLGFKSELIAKALQNIQATTTQEIIKEALKKLQTLR.

The protein belongs to the RuvA family. In terms of assembly, homotetramer. Forms an RuvA(8)-RuvB(12)-Holliday junction (HJ) complex. HJ DNA is sandwiched between 2 RuvA tetramers; dsDNA enters through RuvA and exits via RuvB. An RuvB hexamer assembles on each DNA strand where it exits the tetramer. Each RuvB hexamer is contacted by two RuvA subunits (via domain III) on 2 adjacent RuvB subunits; this complex drives branch migration. In the full resolvosome a probable DNA-RuvA(4)-RuvB(12)-RuvC(2) complex forms which resolves the HJ.

The protein localises to the cytoplasm. Its function is as follows. The RuvA-RuvB-RuvC complex processes Holliday junction (HJ) DNA during genetic recombination and DNA repair, while the RuvA-RuvB complex plays an important role in the rescue of blocked DNA replication forks via replication fork reversal (RFR). RuvA specifically binds to HJ cruciform DNA, conferring on it an open structure. The RuvB hexamer acts as an ATP-dependent pump, pulling dsDNA into and through the RuvAB complex. HJ branch migration allows RuvC to scan DNA until it finds its consensus sequence, where it cleaves and resolves the cruciform DNA. This chain is Holliday junction branch migration complex subunit RuvA, found in Wolinella succinogenes (strain ATCC 29543 / DSM 1740 / CCUG 13145 / JCM 31913 / LMG 7466 / NCTC 11488 / FDC 602W) (Vibrio succinogenes).